Reading from the N-terminus, the 79-residue chain is Acyl carrier protein (79 aa).

The Carrier domain occupies 2-77 (SEIGERVKKI…DAVKFLEKNA (76 aa)). At Ser-37 the chain carries O-(pantetheine 4'-phosphoryl)serine.

Belongs to the acyl carrier protein (ACP) family. 4'-phosphopantetheine is transferred from CoA to a specific serine of apo-ACP by AcpS. This modification is essential for activity because fatty acids are bound in thioester linkage to the sulfhydryl of the prosthetic group.

The protein resides in the cytoplasm. The protein operates within lipid metabolism; fatty acid biosynthesis. Its function is as follows. Carrier of the growing fatty acid chain in fatty acid biosynthesis. This is Acyl carrier protein from Rhodopseudomonas palustris (strain BisA53).